Consider the following 348-residue polypeptide: Putative S-adenosyl-L-methionine-dependent methyltransferase Mb3432 (348 aa).

S-adenosyl-L-methionine-binding positions include Asp171 and 200 to 201 (DL).

Belongs to the UPF0677 family.

In terms of biological role, exhibits S-adenosyl-L-methionine-dependent methyltransferase activity. The polypeptide is Putative S-adenosyl-L-methionine-dependent methyltransferase Mb3432 (Mycobacterium bovis (strain ATCC BAA-935 / AF2122/97)).